The following is a 309-amino-acid chain: MAAEKRVFLDISVDENLIGRIEIRLFVEDAPKTCENFRALCTGEVGMTPNNKARLHYKQNEFHRIVKKFMIQGGDITEGDGRGGFSIYGRYFDDEKFKLKHSRPYLLSMANKGPNSNSSQFFITTAAAPHCNGKHVVFGEVVKGQNVVDYIDNLAVDDKSKPLAKVLISNCGELVKKKKPLKTDEELAAALEEKNNNARDNEIPKCPKSWLYRDDDNEKKHEMRNDKRREYRSRRSRSRSHEKNRDYKKENRGDSSRSQPRRDENGITVRGRGGVRFRRERSATPEHWRRNAPTKWVHDSHKHPEEDLV.

The 166-residue stretch at 8–173 (FLDISVDENL…AKVLISNCGE (166 aa)) folds into the PPIase cyclophilin-type domain. Basic and acidic residues-rich tracts occupy residues 217 to 229 (NEKK…DKRR), 239 to 265 (RSHE…RDEN), 280 to 289 (ERSATPEHWR), and 296 to 309 (WVHD…EDLV). Residues 217 to 309 (NEKKHEMRND…SHKHPEEDLV (93 aa)) are disordered.

The protein belongs to the cyclophilin-type PPIase family. Co-expressed with pdi-1 in the syncytial hypodermis.

The enzyme catalyses [protein]-peptidylproline (omega=180) = [protein]-peptidylproline (omega=0). PPIases accelerate the folding of proteins. It catalyzes the cis-trans isomerization of proline imidic peptide bonds in oligopeptides. Thought to function as a catalyst in the folding and modification of cuticle collagens. The chain is Peptidyl-prolyl cis-trans isomerase 9 (cyn-9) from Caenorhabditis elegans.